The chain runs to 693 residues: ATP-dependent DNA helicase RecG (693 aa).

Positions 48–146 (THLYPIGELL…GDLSTPELQE (99 aa)) are wedge domain. The region spanning 283-448 (DMALDVPMMR…AYADLDTSVI (166 aa)) is the Helicase ATP-binding domain. 296-303 (GDVGSGKT) is an ATP binding site. Positions 397–400 (DEQH) match the DEAH box motif. Residues 482-628 (EGRQAYWVCT…GFVIAQKDLE (147 aa)) form the Helicase C-terminal domain.

It belongs to the helicase family. RecG subfamily. As to quaternary structure, monomer in solution. Probably a monomer on HJ DNA. Binding to fork DNA is facilitated by SSB; the proteins do not seem to stably associate. It depends on Mg(2+) as a cofactor.

It catalyses the reaction Couples ATP hydrolysis with the unwinding of duplex DNA by translocating in the 3'-5' direction.. It carries out the reaction ATP + H2O = ADP + phosphate + H(+). Its function is as follows. Plays a critical role in recombination and DNA repair. Helps process Holliday junction (HJ) intermediates to mature products by catalyzing branch migration. Has replication fork regression activity, unwinds stalled or blocked replication forks to make a HJ that can be resolved by RuvC or RusA. Also rewinds unwound dsDNA in an ATP-dependent manner. Has double-stranded (ds)DNA unwinding activity characteristic of a DNA helicase with 3'-5' polarity in vitro on linear dsDNA; branched duplex DNA (Y-DNA) substrates adopt different conformations that influence which of the two arms are unwound. Binds and unwinds HJ and Y-DNA but not linear duplex DNA; binds no more than 10 nucleotides of ssDNA at a fork. Has a role in constitutive stable DNA replication (cSDR, DNA replication in the absence of protein synthesis) and R-loop (RNA annealed with dsDNA) formation. Unwinds R-loops but not RNA:DNA hybrids. Is genetically synergistic to RadA and RuvABC. The polypeptide is ATP-dependent DNA helicase RecG (Escherichia coli (strain K12)).